A 422-amino-acid polypeptide reads, in one-letter code: GTPase Obg (422 aa).

The region spanning 2 to 157 (AKFIDEIKLT…YLAHIVLKVM (156 aa)) is the Obg domain. The OBG-type G domain occupies 158–325 (SDVGIIGKPS…LKGKIWKILE (168 aa)). Residues 164–171 (GKPSAGKS), 189–193 (FTTLV), 210–213 (DLPG), 279–282 (NKSD), and 306–308 (SAI) contribute to the GTP site. Residues Ser171 and Thr191 each contribute to the Mg(2+) site. Residues 334 to 420 (EEEETEENVE…ILDYEFEWDG (87 aa)) enclose the OCT domain.

This sequence belongs to the TRAFAC class OBG-HflX-like GTPase superfamily. OBG GTPase family. Monomer. The cofactor is Mg(2+).

Its subcellular location is the cytoplasm. Functionally, an essential GTPase which binds GTP, GDP and possibly (p)ppGpp with moderate affinity, with high nucleotide exchange rates and a fairly low GTP hydrolysis rate. Plays a role in control of the cell cycle, stress response, ribosome biogenesis and in those bacteria that undergo differentiation, in morphogenesis control. This is GTPase Obg from Mycoplasmopsis agalactiae (strain NCTC 10123 / CIP 59.7 / PG2) (Mycoplasma agalactiae).